A 158-amino-acid chain; its full sequence is Transcription elongation factor GreA (158 aa).

The protein belongs to the GreA/GreB family.

Functionally, necessary for efficient RNA polymerase transcription elongation past template-encoded arresting sites. The arresting sites in DNA have the property of trapping a certain fraction of elongating RNA polymerases that pass through, resulting in locked ternary complexes. Cleavage of the nascent transcript by cleavage factors such as GreA or GreB allows the resumption of elongation from the new 3'terminus. GreA releases sequences of 2 to 3 nucleotides. In Methylobacterium sp. (strain 4-46), this protein is Transcription elongation factor GreA.